We begin with the raw amino-acid sequence, 477 residues long: UDP-N-acetylmuramate--L-alanine ligase (477 aa).

Position 122-128 (glycine 122–threonine 128) interacts with ATP.

It belongs to the MurCDEF family.

The protein resides in the cytoplasm. It carries out the reaction UDP-N-acetyl-alpha-D-muramate + L-alanine + ATP = UDP-N-acetyl-alpha-D-muramoyl-L-alanine + ADP + phosphate + H(+). The protein operates within cell wall biogenesis; peptidoglycan biosynthesis. In terms of biological role, cell wall formation. The protein is UDP-N-acetylmuramate--L-alanine ligase of Xanthomonas campestris pv. campestris (strain 8004).